A 273-amino-acid chain; its full sequence is Dermonecrotic toxin LspaSicTox-alphaIA1ii (273 aa).

Residue histidine 5 is part of the active site. 2 residues coordinate Mg(2+): glutamate 25 and aspartate 27. Histidine 41 functions as the Nucleophile in the catalytic mechanism. Intrachain disulfides connect cysteine 45-cysteine 51 and cysteine 47-cysteine 190. Residue aspartate 85 participates in Mg(2+) binding.

It belongs to the arthropod phospholipase D family. Class II subfamily. Mg(2+) is required as a cofactor. Expressed by the venom gland.

The protein localises to the secreted. The enzyme catalyses an N-(acyl)-sphingosylphosphocholine = an N-(acyl)-sphingosyl-1,3-cyclic phosphate + choline. The catalysed reaction is an N-(acyl)-sphingosylphosphoethanolamine = an N-(acyl)-sphingosyl-1,3-cyclic phosphate + ethanolamine. It catalyses the reaction a 1-acyl-sn-glycero-3-phosphocholine = a 1-acyl-sn-glycero-2,3-cyclic phosphate + choline. It carries out the reaction a 1-acyl-sn-glycero-3-phosphoethanolamine = a 1-acyl-sn-glycero-2,3-cyclic phosphate + ethanolamine. In terms of biological role, dermonecrotic toxins cleave the phosphodiester linkage between the phosphate and headgroup of certain phospholipids (sphingolipid and lysolipid substrates), forming an alcohol (often choline) and a cyclic phosphate. This toxin acts on sphingomyelin (SM). It may also act on ceramide phosphoethanolamine (CPE), lysophosphatidylcholine (LPC) and lysophosphatidylethanolamine (LPE), but not on lysophosphatidylserine (LPS), and lysophosphatidylglycerol (LPG). It acts by transphosphatidylation, releasing exclusively cyclic phosphate products as second products. Induces dermonecrosis, hemolysis, increased vascular permeability, edema, inflammatory response, and platelet aggregation. This is Dermonecrotic toxin LspaSicTox-alphaIA1ii from Loxosceles spadicea (Recluse spider).